Consider the following 214-residue polypeptide: Germin-like protein (214 aa).

Residues 1–22 form the signal peptide; that stretch reads MVMMRIFFFLFLLAFPVFTANA. The cysteines at positions 28 and 44 are disulfide-linked. Residues 58 to 204 enclose the Cupin type-1 domain; that stretch reads SGLAKPGNTT…TTCLDEATIK (147 aa). Positions 106, 108, and 113 each coordinate Mn(2+).

This sequence belongs to the germin family. As to quaternary structure, oligomer (believed to be a pentamer but probably hexamer). Cotyledons and leaves.

It is found in the secreted. Its subcellular location is the extracellular space. The protein resides in the apoplast. The chain is Germin-like protein (GLP) from Ipomoea nil (Japanese morning glory).